We begin with the raw amino-acid sequence, 559 residues long: 5'-AMP-activated protein kinase catalytic subunit alpha-1 (559 aa).

The 253-residue stretch at 27 to 279 (YILGDTLGVG…IKDIREHEWF (253 aa)) folds into the Protein kinase domain. Position 32 is a phosphothreonine (T32). ATP contacts are provided by residues 33–41 (LGVGTFGKV) and K56. D150 (proton acceptor) is an active-site residue. The residue at position 183 (T183) is a Phosphothreonine; by LKB1 and CaMKK2. The segment at 302 to 381 (EALKEVCEKF…PERVPFLVAE (80 aa)) is AIS. T355 carries the post-translational modification Phosphothreonine. The residue at position 356 (S356) is a Phosphoserine. A Phosphoserine; by ULK1 modification is found at S360. Residue T368 is modified to Phosphothreonine; by ULK1. At T382 the chain carries Phosphothreonine. S397 carries the post-translational modification Phosphoserine; by ULK1. Residues S467 and S486 each carry the phosphoserine modification. The span at 485 to 505 (KSGTATPQRSGSISNYRSCQR) shows a compositional bias: polar residues. A disordered region spans residues 485-536 (KSGTATPQRSGSISNYRSCQRSDSDAEAQGKPSDVSLTSSVTSLDSSPVDVA). T488 carries the post-translational modification Phosphothreonine; by ULK1. Phosphothreonine is present on T490. Phosphoserine occurs at positions 496, 508, 524, and 527. Over residues 516-535 (PSDVSLTSSVTSLDSSPVDV) the composition is skewed to low complexity.

This sequence belongs to the protein kinase superfamily. CAMK Ser/Thr protein kinase family. SNF1 subfamily. In terms of assembly, AMPK is a heterotrimer of an alpha catalytic subunit (PRKAA1 or PRKAA2), a beta (PRKAB1 or PRKAB2) and a gamma non-catalytic subunits (PRKAG1, PRKAG2 or PRKAG3). Interacts with FNIP1 and FNIP2. The cofactor is Mg(2+). In terms of processing, phosphorylated at Thr-183 by STK11/LKB1 in complex with STE20-related adapter-alpha (STRADA) pseudo kinase and CAB39. Also phosphorylated at Thr-183 by CAMKK2; triggered by a rise in intracellular calcium ions, without detectable changes in the AMP/ATP ratio. CAMKK1 can also phosphorylate Thr-183, but at a much lower level. Dephosphorylated by protein phosphatase 2A and 2C (PP2A and PP2C). Phosphorylated by ULK1 and ULK2; leading to negatively regulate AMPK activity and suggesting the existence of a regulatory feedback loop between ULK1, ULK2 and AMPK. Dephosphorylated by PPM1A and PPM1B. Ubiquitinated. Post-translationally, glycosylated; O-GlcNAcylated by OGT, promoting the AMP-activated protein kinase (AMPK) activity.

Its subcellular location is the cytoplasm. It localises to the nucleus. The catalysed reaction is L-seryl-[protein] + ATP = O-phospho-L-seryl-[protein] + ADP + H(+). It catalyses the reaction L-threonyl-[protein] + ATP = O-phospho-L-threonyl-[protein] + ADP + H(+). It carries out the reaction L-seryl-[acetyl-CoA carboxylase] + ATP = O-phospho-L-seryl-[acetyl-CoA carboxylase] + ADP + H(+). The enzyme catalyses L-seryl-[3-hydroxy-3-methylglutaryl-coenzyme A reductase] + ATP = O-phospho-L-seryl-[3-hydroxy-3-methylglutaryl-coenzyme A reductase] + ADP + H(+). The catalysed reaction is L-seryl-[tau protein] + ATP = O-phospho-L-seryl-[tau protein] + ADP + H(+). It catalyses the reaction L-threonyl-[tau protein] + ATP = O-phospho-L-threonyl-[tau protein] + ADP + H(+). With respect to regulation, activated by phosphorylation on Thr-183. Binding of AMP to non-catalytic gamma subunit (PRKAG1, PRKAG2 or PRKAG3) results in allosteric activation, inducing phosphorylation on Thr-183. AMP-binding to gamma subunit also sustains activity by preventing dephosphorylation of Thr-183. ADP also stimulates Thr-183 phosphorylation, without stimulating already phosphorylated AMPK. ATP promotes dephosphorylation of Thr-183, rendering the enzyme inactive. Under physiological conditions AMPK mainly exists in its inactive form in complex with ATP, which is much more abundant than AMP. Selectively inhibited by compound C (6-[4-(2-Piperidin-1-yl-ethoxy)-phenyl)]-3-pyridin-4-yl-pyyrazolo[1,5-a] pyrimidine. Activated by resveratrol, a natural polyphenol present in red wine, and S17834, a synthetic polyphenol. In terms of biological role, catalytic subunit of AMP-activated protein kinase (AMPK), an energy sensor protein kinase that plays a key role in regulating cellular energy metabolism. In response to reduction of intracellular ATP levels, AMPK activates energy-producing pathways and inhibits energy-consuming processes: inhibits protein, carbohydrate and lipid biosynthesis, as well as cell growth and proliferation. AMPK acts via direct phosphorylation of metabolic enzymes, and by longer-term effects via phosphorylation of transcription regulators. Regulates lipid synthesis by phosphorylating and inactivating lipid metabolic enzymes such as ACACA, ACACB, GYS1, HMGCR and LIPE; regulates fatty acid and cholesterol synthesis by phosphorylating acetyl-CoA carboxylase (ACACA and ACACB) and hormone-sensitive lipase (LIPE) enzymes, respectively. Promotes lipolysis of lipid droplets by mediating phosphorylation of isoform 1 of CHKA (CHKalpha2). Regulates insulin-signaling and glycolysis by phosphorylating IRS1, PFKFB2 and PFKFB3. AMPK stimulates glucose uptake in muscle by increasing the translocation of the glucose transporter SLC2A4/GLUT4 to the plasma membrane, possibly by mediating phosphorylation of TBC1D4/AS160. Regulates transcription and chromatin structure by phosphorylating transcription regulators involved in energy metabolism such as CRTC2/TORC2, FOXO3, histone H2B, HDAC5, MEF2C, MLXIPL/ChREBP, EP300, HNF4A, p53/TP53, SREBF1, SREBF2 and PPARGC1A. Acts as a key regulator of glucose homeostasis in liver by phosphorylating CRTC2/TORC2, leading to CRTC2/TORC2 sequestration in the cytoplasm. In response to stress, phosphorylates 'Ser-36' of histone H2B (H2BS36ph), leading to promote transcription. Acts as a key regulator of cell growth and proliferation by phosphorylating FNIP1, TSC2, RPTOR, WDR24 and ATG1/ULK1: in response to nutrient limitation, negatively regulates the mTORC1 complex by phosphorylating RPTOR component of the mTORC1 complex and by phosphorylating and activating TSC2. Also phosphorylates and inhibits GATOR2 subunit WDR24 in response to nutrient limitation, leading to suppress glucose-mediated mTORC1 activation. In response to energetic stress, phosphorylates FNIP1, inactivating the non-canonical mTORC1 signaling, thereby promoting nuclear translocation of TFEB and TFE3, and inducing transcription of lysosomal or autophagy genes. In response to nutrient limitation, promotes autophagy by phosphorylating and activating ATG1/ULK1. In that process, it also activates WDR45/WIPI4. Phosphorylates CASP6, thereby preventing its autoprocessing and subsequent activation. In response to nutrient limitation, phosphorylates transcription factor FOXO3 promoting FOXO3 mitochondrial import. Also acts as a regulator of cellular polarity by remodeling the actin cytoskeleton; probably by indirectly activating myosin. AMPK also acts as a regulator of circadian rhythm by mediating phosphorylation of CRY1, leading to destabilize it. May regulate the Wnt signaling pathway by phosphorylating CTNNB1, leading to stabilize it. Also has tau-protein kinase activity: in response to amyloid beta A4 protein (APP) exposure, activated by CAMKK2, leading to phosphorylation of MAPT/TAU; however the relevance of such data remains unclear in vivo. Also phosphorylates CFTR, EEF2K, KLC1, NOS3 and SLC12A1. Regulates hepatic lipogenesis. Activated via SIRT3, represses sterol regulatory element-binding protein (SREBP) transcriptional activities and ATP-consuming lipogenesis to restore cellular energy balance. Upon stress, regulates mitochondrial fragmentation through phosphorylation of MTFR1L. This is 5'-AMP-activated protein kinase catalytic subunit alpha-1 (Prkaa1) from Mus musculus (Mouse).